The following is a 198-amino-acid chain: MSTSKYPSEIKINPNKGGKAAIERLVEAYGFTTRQALADHLEVSKSTLANRYLRDTFPADWIIQCALETGTSLKWLTTGQGLKQSSLTVATEELPKFRLTAGKMIEDGSYVFDSSFLPANLSSPIVIQDGLVTYICDQKFSEVLDGHWLINIDGTYSIRKITKLPKGMIKITTTENSFECAFSDIEVVACIRSTIVSN.

Belongs to the CI repressor protein family.

The protein is Protein ORFi in retron Ec67 of Escherichia coli.